A 185-amino-acid polypeptide reads, in one-letter code: Ribosome-recycling factor (185 aa).

The protein belongs to the RRF family.

Its subcellular location is the cytoplasm. Functionally, responsible for the release of ribosomes from messenger RNA at the termination of protein biosynthesis. May increase the efficiency of translation by recycling ribosomes from one round of translation to another. This Ehrlichia ruminantium (strain Welgevonden) protein is Ribosome-recycling factor.